The sequence spans 141 residues: Hemoglobin subunit alpha-2 (141 aa).

S1 is modified (N-acetylserine). The Globin domain occupies 1-141; it reads SLSTKDKETV…LARALSEKYR (141 aa). H59 serves as a coordination point for O2. Position 88 (H88) interacts with heme b.

It belongs to the globin family. In terms of assembly, hb2 is a heterotetramer of two alpha-2 chains and two beta chains. As to expression, red blood cells.

Functionally, involved in oxygen transport from gills to the various peripheral tissues. The protein is Hemoglobin subunit alpha-2 (hba2) of Notothenia angustata (Rockcod).